The chain runs to 95 residues: Co-chaperonin GroES (95 aa).

Belongs to the GroES chaperonin family. Heptamer of 7 subunits arranged in a ring. Interacts with the chaperonin GroEL.

Its subcellular location is the cytoplasm. Functionally, together with the chaperonin GroEL, plays an essential role in assisting protein folding. The GroEL-GroES system forms a nano-cage that allows encapsulation of the non-native substrate proteins and provides a physical environment optimized to promote and accelerate protein folding. GroES binds to the apical surface of the GroEL ring, thereby capping the opening of the GroEL channel. This is Co-chaperonin GroES from Maricaulis maris (strain MCS10) (Caulobacter maris).